A 437-amino-acid chain; its full sequence is Protein translocase subunit SecY (437 aa).

10 helical membrane-spanning segments follow: residues 19–39, 68–88, 121–141, 156–176, 188–208, 218–238, 274–294, 317–337, 378–398, and 400–420; these read LFTL…APGV, LLQI…SIIL, VALA…GALF, IFTT…VMWL, GMSI…LWAI, WIEF…VVFV, GVIP…IVQF, YIAT…AISF, SLYL…FGGA, and QNFP…LETV.

This sequence belongs to the SecY/SEC61-alpha family. Component of the Sec protein translocase complex. Heterotrimer consisting of SecY, SecE and SecG subunits. The heterotrimers can form oligomers, although 1 heterotrimer is thought to be able to translocate proteins. Interacts with the ribosome. Interacts with SecDF, and other proteins may be involved. Interacts with SecA.

The protein resides in the cell membrane. The central subunit of the protein translocation channel SecYEG. Consists of two halves formed by TMs 1-5 and 6-10. These two domains form a lateral gate at the front which open onto the bilayer between TMs 2 and 7, and are clamped together by SecE at the back. The channel is closed by both a pore ring composed of hydrophobic SecY resides and a short helix (helix 2A) on the extracellular side of the membrane which forms a plug. The plug probably moves laterally to allow the channel to open. The ring and the pore may move independently. This Streptomyces griseus protein is Protein translocase subunit SecY.